Reading from the N-terminus, the 330-residue chain is MPDFLSITLSGVPPSLTSGETSNLKWQWVDEGVLMLTPHGACSQSVVLSAGIHGNETAPIEILNQLVSDLLASQLPLAVRLLVILGNPPAIRAGERYLTADINRMFGGRYKNHSLTDEARRAEILEQKVGEFFASDPLSLRLHYDLHTAIRGSHHNRFGLLPYRTTPYCAAMLRWLKDSELDALVMHTSAGGTFAHFSSEFCQAASCTLELGKALPFGQNQLEQFRPITAGLRALVSGGQLPTRSTEAMIFYRVVKSLLKQHADFKLWVADDTVNFTRYPQGTLMIEQLNEHYCVEHEYEWILFPNPRVALGLRAGIMLVQMDENDLLQA.

Positions 53, 56, and 147 each coordinate Zn(2+). E210 is an active-site residue.

It belongs to the AspA/AstE family. Succinylglutamate desuccinylase subfamily. Requires Zn(2+) as cofactor.

The catalysed reaction is N-succinyl-L-glutamate + H2O = L-glutamate + succinate. It participates in amino-acid degradation; L-arginine degradation via AST pathway; L-glutamate and succinate from L-arginine: step 5/5. Transforms N(2)-succinylglutamate into succinate and glutamate. This is Succinylglutamate desuccinylase from Yersinia enterocolitica serotype O:8 / biotype 1B (strain NCTC 13174 / 8081).